Here is a 307-residue protein sequence, read N- to C-terminus: Chaperone protein DnaJ 2 (307 aa).

In terms of domain architecture, J spans 6–71; sequence NYYQILGVPR…TKRRELDSRL (66 aa). The interval 69 to 133 is disordered; the sequence is SRLFGRFRRP…TRRTKVVSPA (65 aa). Residues 88–99 are compositionally biased toward polar residues; the sequence is NGGRSPNGTSVN. Residues 100 to 114 are compositionally biased toward low complexity; sequence GQVRTPTGRTGTRQP.

This sequence belongs to the DnaJ family. As to quaternary structure, homodimer. Zn(2+) serves as cofactor.

It localises to the cytoplasm. In terms of biological role, participates actively in the response to hyperosmotic and heat shock by preventing the aggregation of stress-denatured proteins and by disaggregating proteins, also in an autonomous, DnaK-independent fashion. Unfolded proteins bind initially to DnaJ; upon interaction with the DnaJ-bound protein, DnaK hydrolyzes its bound ATP, resulting in the formation of a stable complex. GrpE releases ADP from DnaK; ATP binding to DnaK triggers the release of the substrate protein, thus completing the reaction cycle. Several rounds of ATP-dependent interactions between DnaJ, DnaK and GrpE are required for fully efficient folding. Also involved, together with DnaK and GrpE, in the DNA replication of plasmids through activation of initiation proteins. This is Chaperone protein DnaJ 2 (dnaJ2) from Synechocystis sp. (strain ATCC 27184 / PCC 6803 / Kazusa).